Consider the following 234-residue polypeptide: CD-NTase-associated protein 13 (234 aa).

The helical transmembrane segment at 20–42 (TIMKNVIANVSTAITLALMILWI) threads the bilayer.

It in the C-terminal section; belongs to the bacterial STING family.

Its subcellular location is the cell inner membrane. Functionally, effector protein of a CBASS antivirus system. CBASS (cyclic oligonucleotide-based antiphage signaling system) provides immunity against bacteriophage. The CD-NTase protein synthesizes cyclic nucleotides in response to infection; these serve as specific second messenger signals. The signals activate a diverse range of effectors, leading to bacterial cell death and thus abortive phage infection. A type I-D CBASS(GG) system. In terms of biological role, binds c-di-GMP (synthesized by the cognate CdnE encoded upstream in the same operon) and about 10-fold less well 3'3'-cGAMP, but not c-di-AMP, 2'3'-cGAMP or cUMP-AMP (tested with a protein without the transmembrane region). The effector protein for this CBASS system, its activity is stimulated by c-di-GMP and leads to cell death. This chain is CD-NTase-associated protein 13, found in Roseivirga ehrenbergii (strain DSM 102268 / JCM 13514 / KCTC 12282 / NCIMB 14502 / KMM 6017).